Reading from the N-terminus, the 308-residue chain is MMLILKLSLLSLLIATPGLLVSGANMITCYGDVQKLHCETGLIIVKSSLYGRTDSTTCSTNRPPAQVAVTTCSLPITTIGDRCNGLPDCELKTDLLGNTDPCQGTYKYYNTSFDCINGNYAVICEHGYSTLDCGNDAILIVNANYGRASSQICSNGLPNGLTQNTNCYAANTLTTVAGLCNGKKSCTVEALNTIFSDPCSGTVKYLTVTYICTKEMVVCEGGSASINCGAQTIKTIWANYGRTDSTVCSTGRPGSQLLNTNCYTSDTLNKVAAGCDHLSTCTIPANNNFFGDPCPNTYKYLRIVYACV.

The N-terminal stretch at 1–23 (MMLILKLSLLSLLIATPGLLVSG) is a signal peptide. 3 SUEL-type lectin domains span residues 27-115 (ITCY…SFDC), 123-213 (ICEH…YICT), and 218-308 (VCEG…YACV). N-linked (GlcNAc...) asparagine glycosylation occurs at Asn110.

Homotrimer. In terms of tissue distribution, expressed in eggs, but not in liver.

It is found in the secreted. Functionally, lectin that binds L-rhamnose. Also binds monosaccharides possessing steric similarity to the hydroxyl group orientation at C2 and C4 of the pyranose ring structure of L-rhamnose, such as L-mannose and L-lyxose. In Silurus asotus (Amur catfish), this protein is Rhamnose-binding lectin.